Consider the following 176-residue polypeptide: Peptide methionine sulfoxide reductase MsrA (176 aa).

Cys-14 is a catalytic residue.

Belongs to the MsrA Met sulfoxide reductase family.

The catalysed reaction is L-methionyl-[protein] + [thioredoxin]-disulfide + H2O = L-methionyl-(S)-S-oxide-[protein] + [thioredoxin]-dithiol. It catalyses the reaction [thioredoxin]-disulfide + L-methionine + H2O = L-methionine (S)-S-oxide + [thioredoxin]-dithiol. In terms of biological role, has an important function as a repair enzyme for proteins that have been inactivated by oxidation. Catalyzes the reversible oxidation-reduction of methionine sulfoxide in proteins to methionine. The protein is Peptide methionine sulfoxide reductase MsrA of Halalkalibacterium halodurans (strain ATCC BAA-125 / DSM 18197 / FERM 7344 / JCM 9153 / C-125) (Bacillus halodurans).